The primary structure comprises 1042 residues: Serine/threonine-protein kinase LATS2 (1042 aa).

A disordered region spans residues 23–44; the sequence is REGLKQPSKASTQGLLVGPNSD. Residues 30–44 show a composition bias toward polar residues; the sequence is SKASTQGLLVGPNSD. At Ser82 the chain carries Phosphoserine; by AURKA. One can recognise a UBA domain in the interval 97–138; sequence EVNRQMLQELVNAGCDQEMAGRALKQTGSRSIEAALEYISKM. Positions 100-140 are interaction with ubiquitinated AMOTL2; it reads RQMLQELVNAGCDQEMAGRALKQTGSRSIEAALEYISKMGY. The segment at 237-282 is disordered; it reads HFPGTHYGRGHLLSEQPGYGVQRSSSFQNKTPPDAYSSMAKAQGGP. The segment covering 258-267 has biased composition (polar residues); it reads QRSSSFQNKT. Thr267 carries the post-translational modification Phosphothreonine. Position 362 is a phosphoserine (Ser362). 3 disordered regions span residues 378-399, 442-481, and 501-550; these read RAGP…LPAP, PATE…HLLL, and QSLR…KRES. Residues 472 to 475 carry the PPxY motif motif; the sequence is PPPY. A compositionally biased stretch (basic and acidic residues) spans 507-530; the sequence is TEQDRSDKSHKGAKGDKAGRDKKQ. At Ser534 the chain carries Phosphoserine. The segment covering 541-550 has biased composition (basic and acidic residues); that stretch reads NSRDEEKRES. The 306-residue stretch at 626–931 folds into the Protein kinase domain; sequence FVKIKTLGIG…ADDLKAHPFF (306 aa). Residues 632 to 640 and Lys655 contribute to the ATP site; that span reads LGIGAFGEV. Residue Asp749 is the Proton acceptor of the active site. The AGC-kinase C-terminal domain occupies 932 to 1010; that stretch reads NTIDFSRDIR…RRFFDDNGYP (79 aa). Thr999 is subject to Phosphothreonine. Residues 1014-1042 form a disordered region; the sequence is PKPSEPAESADPGDADLEGAAEGCQPVYV.

The protein belongs to the protein kinase superfamily. AGC Ser/Thr protein kinase family. In terms of assembly, interacts with and is phosphorylated by AURKA. Binds to AR. Interacts with AJUBA during mitosis and this complex regulates organization of the spindle apparatus through recruitment of gamma-tubulin to the centrosome. Interacts (via PPxY motif) with YAP1 (via WW domains). Interacts with MOB1A and MOB1B. Interacts with LIMD1, WTIP and AJUBA. Interacts with SNAI1. Interacts with WWC1, WWC2 and WWC3 (via their WW domains). Interacts (via UBA domain) with ubiquitinated AMOTL2; the interaction promotes LATS2 phosphorylation of YAP1. It depends on Mg(2+) as a cofactor. Post-translationally, autophosphorylated and phosphorylated during M-phase and the G1/S-phase of the cell cycle. Phosphorylated and activated by STK3/MST2. Phosphorylated by MAP4Ks; in parallel to STK3/MST2 and resulting to its activation. Phosphorylation by NUAK2 may regulate its activity in phosphorylation and inactivation YAP1. As to expression, expressed at high levels in ovary and testis and at lower levels in all other tissues examined.

The protein localises to the cytoplasm. The protein resides in the cytoskeleton. It is found in the microtubule organizing center. It localises to the centrosome. Its subcellular location is the spindle pole. The protein localises to the nucleus. The enzyme catalyses L-seryl-[protein] + ATP = O-phospho-L-seryl-[protein] + ADP + H(+). The catalysed reaction is L-threonyl-[protein] + ATP = O-phospho-L-threonyl-[protein] + ADP + H(+). Negative regulator of YAP1 in the Hippo signaling pathway that plays a pivotal role in organ size control and tumor suppression by restricting proliferation and promoting apoptosis. The core of this pathway is composed of a kinase cascade wherein STK3/MST2 and STK4/MST1, in complex with its regulatory protein SAV1, phosphorylates and activates LATS1/2 in complex with its regulatory protein MOB1, which in turn phosphorylates and inactivates YAP1 oncoprotein and WWTR1/TAZ. Phosphorylation of YAP1 by LATS2 inhibits its translocation into the nucleus to regulate cellular genes important for cell proliferation, cell death, and cell migration. Also phosphorylates YAP1 in response to cell contact inhibition-driven WWP1 ubiquitination of AMOTL2, which results in LATS2 activation. Acts as a tumor suppressor which plays a critical role in centrosome duplication, maintenance of mitotic fidelity and genomic stability. Negatively regulates G1/S transition by down-regulating cyclin E/CDK2 kinase activity. Negative regulator of the androgen receptor. Phosphorylates SNAI1 in the nucleus leading to its nuclear retention and stabilization, which enhances its epithelial-mesenchymal transition and tumor cell invasion/migration activities. This tumor-promoting activity is independent of its effects upon YAP1 or WWTR1/TAZ. Acts as an activator of the NLRP3 inflammasome by mediating phosphorylation of 'Ser-265' of NLRP3 following NLRP3 palmitoylation, promoting NLRP3 activation by NEK7. This is Serine/threonine-protein kinase LATS2 from Mus musculus (Mouse).